The sequence spans 41 residues: Virescein (41 aa).

Residue His41 is modified to Histidine amide.

In terms of assembly, monomer. Hemolymph.

The protein resides in the secreted. Its function is as follows. Has antibacterial activity against Gram-positive and Gram-negative bacteria. This Heliothis virescens (Tobacco budworm moth) protein is Virescein.